Here is a 435-residue protein sequence, read N- to C-terminus: tRNA(Ile)-lysidine synthase (435 aa).

Residue 24–29 (SGGLDS) participates in ATP binding.

This sequence belongs to the tRNA(Ile)-lysidine synthase family.

It is found in the cytoplasm. It catalyses the reaction cytidine(34) in tRNA(Ile2) + L-lysine + ATP = lysidine(34) in tRNA(Ile2) + AMP + diphosphate + H(+). Its function is as follows. Ligates lysine onto the cytidine present at position 34 of the AUA codon-specific tRNA(Ile) that contains the anticodon CAU, in an ATP-dependent manner. Cytidine is converted to lysidine, thus changing the amino acid specificity of the tRNA from methionine to isoleucine. In Chromobacterium violaceum (strain ATCC 12472 / DSM 30191 / JCM 1249 / CCUG 213 / NBRC 12614 / NCIMB 9131 / NCTC 9757 / MK), this protein is tRNA(Ile)-lysidine synthase.